The sequence spans 177 residues: Adenine phosphoribosyltransferase (177 aa).

It belongs to the purine/pyrimidine phosphoribosyltransferase family. In terms of assembly, homodimer.

The protein localises to the cytoplasm. It carries out the reaction AMP + diphosphate = 5-phospho-alpha-D-ribose 1-diphosphate + adenine. It functions in the pathway purine metabolism; AMP biosynthesis via salvage pathway; AMP from adenine: step 1/1. Functionally, catalyzes a salvage reaction resulting in the formation of AMP, that is energically less costly than de novo synthesis. This is Adenine phosphoribosyltransferase from Chlorobium chlorochromatii (strain CaD3).